We begin with the raw amino-acid sequence, 149 residues long: Glucosamine 6-phosphate N-acetyltransferase (149 aa).

Positions 5-149 constitute an N-acetyltransferase domain; sequence FKIRKLEISD…KSIQMSKYFD (145 aa). Residues Thr27, 75–78, and 87–89 each bind substrate; these read KFLR and EDV. 97 to 102 is an acetyl-CoA binding site; sequence GKQLGK. Residue 118-119 coordinates substrate; the sequence is YK. 132–134 lines the acetyl-CoA pocket; the sequence is YEK.

This sequence belongs to the acetyltransferase family. GNA1 subfamily. As to quaternary structure, homodimer. Expressed in roots, leaves, stems, cauline leaves, flowers and siliques.

The protein resides in the endoplasmic reticulum membrane. The catalysed reaction is D-glucosamine 6-phosphate + acetyl-CoA = N-acetyl-D-glucosamine 6-phosphate + CoA + H(+). The protein operates within nucleotide-sugar biosynthesis; UDP-N-acetyl-alpha-D-glucosamine biosynthesis; N-acetyl-alpha-D-glucosamine 1-phosphate from alpha-D-glucosamine 6-phosphate (route I): step 1/2. Functionally, acetyltransferase involved in UDP-N-acetylglucosamine (UDP-GlcNAc) biosynthesis. UDP-GlcNAc is an essential metabolite that serves as an initial sugar donor for N-glycan synthesis and thus plays an important role in protein and lipid glycosylation. In Arabidopsis thaliana (Mouse-ear cress), this protein is Glucosamine 6-phosphate N-acetyltransferase (GNA1).